The chain runs to 195 residues: Shikimate kinase (195 aa).

An ATP-binding site is contributed by G33–T38. Residue T37 participates in Mg(2+) binding. Positions 55, 79, and 101 each coordinate substrate. Position 139 (R139) interacts with ATP. R158 lines the substrate pocket. R175 contacts ATP.

It belongs to the shikimate kinase family. As to quaternary structure, monomer. Mg(2+) is required as a cofactor.

It localises to the cytoplasm. It catalyses the reaction shikimate + ATP = 3-phosphoshikimate + ADP + H(+). The protein operates within metabolic intermediate biosynthesis; chorismate biosynthesis; chorismate from D-erythrose 4-phosphate and phosphoenolpyruvate: step 5/7. Functionally, catalyzes the specific phosphorylation of the 3-hydroxyl group of shikimic acid using ATP as a cosubstrate. This Nitrosospira multiformis (strain ATCC 25196 / NCIMB 11849 / C 71) protein is Shikimate kinase.